The sequence spans 260 residues: Snake venom serine protease homolog 1 (260 aa).

Residues 1 to 18 form the signal peptide; sequence MVLIRVLANLLLLQLSYA. Positions 19–24 are excised as a propeptide; that stretch reads QESSEL. The Peptidase S1 domain maps to 25-251; that stretch reads VIGGDECDIN…YTDWIEGIIA (227 aa). Cystine bridges form between C31–C165, C52–C68, C100–C258, C144–C212, C176–C191, and C202–C227. A glycan (N-linked (GlcNAc...) asparagine) is linked at N253.

Belongs to the peptidase S1 family. Snake venom subfamily. In terms of tissue distribution, expressed by the venom gland.

Its subcellular location is the secreted. In terms of biological role, snake venom serine protease homolog that may act in the hemostasis system of the prey. The sequence is that of Snake venom serine protease homolog 1 from Bitis gabonica (Gaboon adder).